The sequence spans 292 residues: UPF0696 protein C11orf68 homolog (292 aa).

Residues 1-10 (MAAAAAAVAG) show a composition bias toward low complexity. Residues 1-60 (MAAAAAAVAGAGRGGGGGADPGQERSRARSWVGAERSEGRRMEPNEELEEEDSPGGREDG) form a disordered region. A compositionally biased stretch (gly residues) spans 11 to 20 (AGRGGGGGAD). A compositionally biased stretch (basic and acidic residues) spans 35 to 44 (ERSEGRRMEP).

The protein belongs to the UPF0696 family.

This Rattus norvegicus (Rat) protein is UPF0696 protein C11orf68 homolog (Bles03).